We begin with the raw amino-acid sequence, 185 residues long: Ribosome-recycling factor (185 aa).

The protein belongs to the RRF family.

It is found in the cytoplasm. Responsible for the release of ribosomes from messenger RNA at the termination of protein biosynthesis. May increase the efficiency of translation by recycling ribosomes from one round of translation to another. The chain is Ribosome-recycling factor from Methylococcus capsulatus (strain ATCC 33009 / NCIMB 11132 / Bath).